Reading from the N-terminus, the 330-residue chain is Lysophospholipase D GDPD3 (330 aa).

A topological domain (cytoplasmic) is located at residue M1. Residues 2 to 22 (IPLLYFVLPTLGSYVMLSIFF) form a helical membrane-spanning segment. Residues 23–200 (LRRPHLLHTP…ANPEMPMAFT (178 aa)) are Extracellular-facing. Positions 39–308 (IRLAAHRGGS…DYPTALRHYL (270 aa)) constitute a GP-PDE domain. A divalent metal cation is bound by residues E71, D73, and H86. The chain crosses the membrane as a helical span at residues 201 to 221 (IWRSFWILLLYYLGLLPFVSI). Residues 222–330 (PEKFFFCFLP…EALSCLSLKK (109 aa)) lie on the Cytoplasmic side of the membrane. The interval 311–330 (QEEETQPPQPEALSCLSLKK) is disordered.

This sequence belongs to the glycerophosphoryl diester phosphodiesterase family. In terms of tissue distribution, highly expressed in stomach and kidney. In stomach detected in the glandular epithelium. Predominantly expressed in the stomach (at protein level).

Its subcellular location is the membrane. The protein localises to the cytoplasm. It is found in the perinuclear region. The protein resides in the endoplasmic reticulum membrane. The catalysed reaction is 1-hexadecanoyl-sn-glycero-3-phosphocholine + H2O = 1-hexadecanoyl-sn-glycero-3-phosphate + choline + H(+). It catalyses the reaction 1-O-hexadecyl-sn-glycero-3-phosphocholine + H2O = 1-O-hexadecyl-sn-glycero-3-phosphate + choline + H(+). It carries out the reaction 1-O-(1Z-octadecenyl)-sn-glycero-3-phospho-N-hexadecanoyl-ethanolamine + H2O = 1-O-(1Z-octadecenyl)-sn-glycero-3-phosphate + N-hexadecanoylethanolamine + H(+). The enzyme catalyses N-(5Z,8Z,11Z,14Z-eicosatetraenoyl)-1-(9Z-octadecenoyl)-sn-glycero-3-phosphoethanolamine + H2O = N-(5Z,8Z,11Z,14Z-eicosatetraenoyl)-ethanolamine + 1-(9Z-octadecenoyl)-sn-glycero-3-phosphate + H(+). The catalysed reaction is N,1-di-(9Z-octadecenoyl)-sn-glycero-3-phosphoethanolamine + H2O = N-(9Z-octadecenoyl) ethanolamine + 1-(9Z-octadecenoyl)-sn-glycero-3-phosphate + H(+). It catalyses the reaction N-hexadecanoyl-1-(9Z-octadecenoyl)-sn-glycero-3-phosphoethanolamine + H2O = N-hexadecanoylethanolamine + 1-(9Z-octadecenoyl)-sn-glycero-3-phosphate + H(+). It carries out the reaction 1-hexadecanoyl-sn-glycero-3-phosphocholine + H2O = sn-glycerol 3-phosphocholine + hexadecanoate + H(+). Its activity is regulated as follows. Lysophospholipase D activity is stimulated by calcium. Loss of lysophospholipase D activity in presence of EDTA. In terms of biological role, hydrolyzes lysoglycerophospholipids to produce lysophosphatidic acid (LPA) and the corresponding amines. Shows a preference for 1-O-alkyl-sn-glycero-3-phosphocholine (lyso-PAF), lysophosphatidylcholine (lyso-PC) and N-acylethanolamine lysophospholipids. Does not display glycerophosphodiester phosphodiesterase activity, since it cannot hydrolyze either glycerophosphoinositol or glycerophosphocholine. In Mus musculus (Mouse), this protein is Lysophospholipase D GDPD3.